The sequence spans 183 residues: uncharacterized protein (183 aa).

This is an uncharacterized protein from Homo sapiens (Human).